Reading from the N-terminus, the 358-residue chain is Phospho-N-acetylmuramoyl-pentapeptide-transferase (358 aa).

The next 10 helical transmembrane spans lie at 21 to 41 (YLTLRAILGVLTALVISFVVG), 71 to 91 (TMGGALILVAIAAATLLWADL), 95 to 115 (YIWVVLVVTLLFGGVGFVDDY), 133 to 153 (FWQSVIALGVALFLYFTASVA), 166 to 186 (VAVNLGGYYVLLTYFVVVGSS), 197 to 217 (GLAVLPTVLVGGALGIFAYAA), 234 to 254 (AGELVVFCGALVGAGLGFLWF), 261 to 281 (VFMGDIGALALGAALGILAVL), 286 to 306 (LVLFIMGGVFVVETVSVMLQV), and 337 to 357 (IVRFWIITVILVLIGLATLKI).

The protein belongs to the glycosyltransferase 4 family. MraY subfamily. The cofactor is Mg(2+).

The protein resides in the cell inner membrane. The catalysed reaction is UDP-N-acetyl-alpha-D-muramoyl-L-alanyl-gamma-D-glutamyl-meso-2,6-diaminopimeloyl-D-alanyl-D-alanine + di-trans,octa-cis-undecaprenyl phosphate = di-trans,octa-cis-undecaprenyl diphospho-N-acetyl-alpha-D-muramoyl-L-alanyl-D-glutamyl-meso-2,6-diaminopimeloyl-D-alanyl-D-alanine + UMP. Its pathway is cell wall biogenesis; peptidoglycan biosynthesis. Its function is as follows. Catalyzes the initial step of the lipid cycle reactions in the biosynthesis of the cell wall peptidoglycan: transfers peptidoglycan precursor phospho-MurNAc-pentapeptide from UDP-MurNAc-pentapeptide onto the lipid carrier undecaprenyl phosphate, yielding undecaprenyl-pyrophosphoryl-MurNAc-pentapeptide, known as lipid I. This is Phospho-N-acetylmuramoyl-pentapeptide-transferase from Nitrosococcus oceani (strain ATCC 19707 / BCRC 17464 / JCM 30415 / NCIMB 11848 / C-107).